The following is a 595-amino-acid chain: MSLFRTYVRVLSYLNQEKNAFLLICTANITLAIITIAEPILFGHVIDTIADKSDTLVTLAVWMCFGISNIIAYVLVARGADRLAHRCRLTVLEKSFARIISMPLIWHQQRGTSHALHTLLRATDSMSSIWLEFMRQHLSTFVALFVLVPVTFKMNWRLSIVLMVLAILYILIARLVMQKTKNGQAAVEHYHHNLFKHITDSISNVSIVQSYNRITEETSALHQHTNNLLSAQTPVLNWWALASGLNRMASTISIVCVLLLGAFFVIKGQLSVGEVVTFVGFSQLMIGRLDQISGFINLAVSSQAKLQEFFDMEDSTFQTNEPANLPSLPNVKGAIQFHHVTYEFPNSSQGVFDISFEVKAGQTVAIVGPTGAGKTTLINLLQRVYDPTVGYISIDGININSINRESLRKALATVFQDAGLFDRTIRDNISIGKTGATDEELYEATKTASAHDFILKKSKNYDTLVGERGSQLSGGERQRLAIARAILKNAPILILDEATSALDVETEIRVKNAIDCISQNRTTFIIAHRLSTIRNADLVLFLDQGRLIEKGSFQELINKDGHFYKLLKAGGLTINQPATKEKDDNIIPLRKAMAL.

5 helical membrane-spanning segments follow: residues 21 to 41 (FLLI…EPIL), 56 to 76 (LVTL…YVLV), 129 to 149 (IWLE…VLVP), 158 to 178 (LSIV…LVMQ), and 252 to 272 (ISIV…QLSV). Residues 21–301 (FLLICTANIT…ISGFINLAVS (281 aa)) form the ABC transmembrane type-1 domain. Residues 335–569 (IQFHHVTYEF…DGHFYKLLKA (235 aa)) form the ABC transporter domain. 368-375 (GPTGAGKT) is an ATP binding site.

It belongs to the ABC transporter superfamily. Beta-(1--&gt;2)glucan exporter (TC 3.A.1.108.1) family. Homodimer.

It localises to the cell inner membrane. It catalyses the reaction [(1-&gt;2)-beta-D-glucosyl](n)(in) + ATP + H2O = [(1-&gt;2)-beta-D-glucosyl](n)(out) + ADP + phosphate + H(+). Its function is as follows. Involved in beta-(1--&gt;2)glucan export. Transmembrane domains (TMD) form a pore in the inner membrane and the ATP-binding domain (NBD) is responsible for energy generation. The chain is Beta-(1--&gt;2)glucan export ATP-binding/permease protein NdvA from Bartonella bacilliformis (strain ATCC 35685 / KC583 / Herrer 020/F12,63).